The chain runs to 134 residues: TSC22 domain family protein 3 (134 aa).

Met-1 carries the post-translational modification N-acetylmethionine. The interval Met-1 to Leu-60 is AP1-binding. 2 positions are modified to phosphoserine: Ala-42 and Val-73. The interval Leu-76–Leu-97 is leucine-zipper. Ser-102 is modified (phosphoserine). Residues Lys-108 to Val-134 are disordered.

It belongs to the TSC-22/Dip/Bun family. In terms of assembly, can form homodimers, however it is likely to function as a monomer. Interacts with NFKB1. Interacts (via N-terminus) with JUN and FOS; these interactions inhibit the binding of active AP1 to its target DNA. Interacts with MYOD1. Interacts with HDAC1; this interaction affects HDAC1 activity on MYOG promoter and thus inhibits MYOD1 transcriptional activity. In terms of tissue distribution, ubiquitously expressed, including in the fetal brain and liver. Expressed in brain, lung, spleen and skeletal muscle. Lower levels detected in heart and kidney. Not detected in the pancreas. In non-lymphoid tissues, in the absence of inflammation, the major source of constitutive expression is the macrophage lineage. Also expressed in cells from different hemopoietic cell lineages, including bone marrow cells, CD34+ stem cells, mature B- and T-cells, monocytes and granulocytes. Down-regulated in activated macrophages from inflammatory lesions of delayed-type hypersensitivity (DTH) reactions, such as in tuberculosis and in Crohn disease, whereas in Burkitt lymphoma, persists in macrophages involved in the phagocytosis of apoptotic malignant cells.

The protein localises to the cytoplasm. The protein resides in the nucleus. Its function is as follows. Protects T-cells from IL2 deprivation-induced apoptosis through the inhibition of FOXO3A transcriptional activity that leads to the down-regulation of the pro-apoptotic factor BCL2L11. In macrophages, plays a role in the anti-inflammatory and immunosuppressive effects of glucocorticoids and IL10. In T-cells, inhibits anti-CD3-induced NFKB1 nuclear translocation and thereby NFKB1 DNA-binding activities. In vitro, suppresses AP-1 transcription factor complex DNA-binding activities. Inhibits myogenic differentiation and mediates anti-myogenic effects of glucocorticoids by binding and regulating MYOD1 and HDAC1 transcriptional activity resulting in reduced expression of MYOG. This chain is TSC22 domain family protein 3, found in Homo sapiens (Human).